Reading from the N-terminus, the 576-residue chain is Adenine deaminase (576 aa).

This sequence belongs to the metallo-dependent hydrolases superfamily. Adenine deaminase family. It depends on Mn(2+) as a cofactor.

The enzyme catalyses adenine + H2O + H(+) = hypoxanthine + NH4(+). This Syntrophobacter fumaroxidans (strain DSM 10017 / MPOB) protein is Adenine deaminase.